Here is a 641-residue protein sequence, read N- to C-terminus: Bilirubin reductase (641 aa).

Glutamine 96 is an FMN binding site. The active-site Proton donor is arginine 167. Residues lysine 214, arginine 295, and 317-318 each bind FMN; that span reads GR. Cysteine 341, cysteine 344, cysteine 348, and cysteine 360 together coordinate [4Fe-4S] cluster. Residues alanine 391, glutamate 410, glutamine 418, lysine 428, and alanine 455 each coordinate FAD.

In the N-terminal section; belongs to the NADH:flavin oxidoreductase/NADH oxidase family. FAD is required as a cofactor. Requires FMN as cofactor. The cofactor is [4Fe-4S] cluster.

It carries out the reaction urobilinogen + 4 A = (4Z,15Z)-bilirubin IXalpha + 4 AH2. The enzyme catalyses urobilinogen + 2 A = (4Z,15Z)-mesobilirubin IXalpha + 2 AH2. Its pathway is porphyrin-containing compound metabolism; protoheme degradation. Functionally, bilirubin reductase that catalyzes reduction of mesobilirubin and/or bilirubin to urobilinogen, a key step during heme degradation. Urobilinogen then spontaneously degrades into urobilin, which gives urine its distinctive yellow color. This chain is Bilirubin reductase, found in Mediterraneibacter gnavus (strain CC55_001C).